The sequence spans 917 residues: Protein translocase subunit SecA 1 (917 aa).

ATP is bound by residues Gln-87, 105–109 (GEGKT), and Asp-507. The interval 866 to 917 (EKSPESIGEDIEGREHPQKHQPFVRQGEKIGRNDPCPCGSGKKYKQCHGKLN) is disordered. Positions 901, 903, 912, and 913 each coordinate Zn(2+). Residues 907-917 (KKYKQCHGKLN) are compositionally biased toward basic residues.

This sequence belongs to the SecA family. As to quaternary structure, monomer and homodimer. Part of the essential Sec protein translocation apparatus which comprises SecA, SecYEG and auxiliary proteins SecDF-YajC and YidC. It depends on Zn(2+) as a cofactor.

It is found in the cell inner membrane. The protein resides in the cytoplasm. It carries out the reaction ATP + H2O + cellular proteinSide 1 = ADP + phosphate + cellular proteinSide 2.. In terms of biological role, part of the Sec protein translocase complex. Interacts with the SecYEG preprotein conducting channel. Has a central role in coupling the hydrolysis of ATP to the transfer of proteins into and across the cell membrane, serving both as a receptor for the preprotein-SecB complex and as an ATP-driven molecular motor driving the stepwise translocation of polypeptide chains across the membrane. In Nitrosospira multiformis (strain ATCC 25196 / NCIMB 11849 / C 71), this protein is Protein translocase subunit SecA 1.